The chain runs to 367 residues: S-adenosylmethionine:tRNA ribosyltransferase-isomerase (367 aa).

Residues 150-182 (RHGEEEESSDEAISSQNPEIATESKRTPSNDDK) are disordered. Positions 171–182 (TESKRTPSNDDK) are enriched in basic and acidic residues.

The protein belongs to the QueA family. In terms of assembly, monomer.

It is found in the cytoplasm. It carries out the reaction 7-aminomethyl-7-carbaguanosine(34) in tRNA + S-adenosyl-L-methionine = epoxyqueuosine(34) in tRNA + adenine + L-methionine + 2 H(+). The protein operates within tRNA modification; tRNA-queuosine biosynthesis. Functionally, transfers and isomerizes the ribose moiety from AdoMet to the 7-aminomethyl group of 7-deazaguanine (preQ1-tRNA) to give epoxyqueuosine (oQ-tRNA). The protein is S-adenosylmethionine:tRNA ribosyltransferase-isomerase of Rickettsia felis (strain ATCC VR-1525 / URRWXCal2) (Rickettsia azadi).